The chain runs to 263 residues: Uroplakin-3b-like protein 1 (263 aa).

The signal sequence occupies residues 1-33 (MDNSWRLGPAIGLSAGQSQLLVSLLLLLTRVQP). Over 34 to 204 (GTDVAAPEHI…PGPQSPGTVV (171 aa)) the chain is Extracellular. Residues Asn51, Asn76, and Asn91 are each glycosylated (N-linked (GlcNAc...) asparagine). The chain crosses the membrane as a helical span at residues 205 to 225 (IIAILSILLAVLLTVLLAVLI). Over 226 to 263 (YTCFNSCRSTSLSGPEEAGSVRRYTTHLAFSTPAEGAS) the chain is Cytoplasmic.

It belongs to the uroplakin-3 family.

It is found in the membrane. This Homo sapiens (Human) protein is Uroplakin-3b-like protein 1.